The primary structure comprises 184 residues: Alpha-tubulin N-acetyltransferase (184 aa).

The 174-residue stretch at Met1–Phe174 folds into the N-acetyltransferase domain. Acetyl-CoA contacts are provided by residues Phe108–Leu121 and Ser144–Lys153.

The protein belongs to the acetyltransferase ATAT1 family.

It catalyses the reaction L-lysyl-[alpha-tubulin] + acetyl-CoA = N(6)-acetyl-L-lysyl-[alpha-tubulin] + CoA + H(+). Its function is as follows. Specifically acetylates 'Lys-40' in alpha-tubulin on the lumenal side of microtubules. Promotes microtubule destabilization and accelerates microtubule dynamics; this activity may be independent of acetylation activity. Acetylates alpha-tubulin with a slow enzymatic rate, due to a catalytic site that is not optimized for acetyl transfer. Enters the microtubule through each end and diffuses quickly throughout the lumen of microtubules. Acetylates only long/old microtubules because of its slow acetylation rate since it does not have time to act on dynamically unstable microtubules before the enzyme is released. The protein is Alpha-tubulin N-acetyltransferase of Plasmodium vivax (strain Salvador I).